A 443-amino-acid polypeptide reads, in one-letter code: Threonine/serine transporter TdcC (443 aa).

The next 11 membrane-spanning stretches (helical) occupy residues 22-42, 44-64, 97-117, 140-160, 163-183, 207-227, 259-279, 319-339, 366-386, 389-409, and 423-443; these read TTWT…FFPI, AGFG…PIAF, GVVI…IYGV, FVAL…KDLM, VMSY…LSLI, ILVT…FSPI, ASML…FTLS, ASII…LGTL, ISMI…PNIL, IEAM…MYAI, and DNVF…YKLF.

Belongs to the amino acid/polyamine transporter 2 family. SdaC/TdcC subfamily.

Its subcellular location is the cell inner membrane. It carries out the reaction L-threonine(in) + H(+)(in) = L-threonine(out) + H(+)(out). The enzyme catalyses L-serine(in) + H(+)(in) = L-serine(out) + H(+)(out). Functionally, involved in the import of threonine and serine into the cell, with the concomitant import of a proton (symport system). In Salmonella paratyphi A (strain ATCC 9150 / SARB42), this protein is Threonine/serine transporter TdcC.